The primary structure comprises 158 residues: Cyclic pyranopterin monophosphate synthase (158 aa).

Substrate-binding positions include 76–78 (LCH) and 114–115 (ME). Asp129 is a catalytic residue.

Belongs to the MoaC family. As to quaternary structure, homohexamer; trimer of dimers.

The enzyme catalyses (8S)-3',8-cyclo-7,8-dihydroguanosine 5'-triphosphate = cyclic pyranopterin phosphate + diphosphate. The protein operates within cofactor biosynthesis; molybdopterin biosynthesis. Functionally, catalyzes the conversion of (8S)-3',8-cyclo-7,8-dihydroguanosine 5'-triphosphate to cyclic pyranopterin monophosphate (cPMP). The protein is Cyclic pyranopterin monophosphate synthase of Shewanella piezotolerans (strain WP3 / JCM 13877).